An 89-amino-acid polypeptide reads, in one-letter code: LYR motif-containing protein 4 (89 aa).

Residues 44–71 adopt a coiled-coil conformation; it reads KNIADSEKIEELLNKAKANLEVIQRQGT.

The protein belongs to the complex I LYR family.

It localises to the mitochondrion. It is found in the nucleus. The protein operates within cofactor biosynthesis; iron-sulfur cluster biosynthesis. Required for nuclear and mitochondrial iron-sulfur protein biosynthesis. The protein is LYR motif-containing protein 4 (LYRM4) of Taeniopygia guttata (Zebra finch).